A 161-amino-acid chain; its full sequence is Phosphopantetheine adenylyltransferase (161 aa).

Residue S10 participates in substrate binding. ATP contacts are provided by residues 10–11 (SF) and H18. Substrate is bound by residues K42, A75, and R89. ATP is bound by residues 90 to 92 (GLR), E100, and 125 to 131 (LSPISSS).

Belongs to the bacterial CoaD family. Homohexamer. It depends on Mg(2+) as a cofactor.

Its subcellular location is the cytoplasm. It catalyses the reaction (R)-4'-phosphopantetheine + ATP + H(+) = 3'-dephospho-CoA + diphosphate. It participates in cofactor biosynthesis; coenzyme A biosynthesis; CoA from (R)-pantothenate: step 4/5. Its function is as follows. Reversibly transfers an adenylyl group from ATP to 4'-phosphopantetheine, yielding dephospho-CoA (dPCoA) and pyrophosphate. The sequence is that of Phosphopantetheine adenylyltransferase from Streptococcus agalactiae serotype Ia (strain ATCC 27591 / A909 / CDC SS700).